The primary structure comprises 285 residues: Tyrosine recombinase XerA (285 aa).

The region spanning 7–84 (IVNSDILEEF…ALKSYFKFEG (78 aa)) is the Core-binding (CB) domain. Residues 100–274 (SLPKSLTEDE…TTKHLREAIE (175 aa)) form the Tyr recombinase domain. Residues R135, K160, H226, R229, and H252 contribute to the active site. The active-site O-(3'-phospho-DNA)-tyrosine intermediate is the Y261.

It belongs to the 'phage' integrase family. XerA subfamily.

The protein localises to the cytoplasm. Site-specific tyrosine recombinase, which acts by catalyzing the cutting and rejoining of the recombining DNA molecules. This chain is Tyrosine recombinase XerA, found in Pyrococcus horikoshii (strain ATCC 700860 / DSM 12428 / JCM 9974 / NBRC 100139 / OT-3).